We begin with the raw amino-acid sequence, 155 residues long: Endoribonuclease YbeY (155 aa).

Zn(2+) is bound by residues His113, His117, and His123.

This sequence belongs to the endoribonuclease YbeY family. Zn(2+) serves as cofactor.

Its subcellular location is the cytoplasm. Functionally, single strand-specific metallo-endoribonuclease involved in late-stage 70S ribosome quality control and in maturation of the 3' terminus of the 16S rRNA. The chain is Endoribonuclease YbeY from Ureaplasma parvum serovar 3 (strain ATCC 27815 / 27 / NCTC 11736).